A 344-amino-acid polypeptide reads, in one-letter code: Zinc transporter 9 (344 aa).

The chain crosses the membrane as a helical span at residues 1-21 (MASILISGAAGVSIPLVGTLL). Residues 22–30 (PLNGGLMRG) are Cytoplasmic-facing. The helical transmembrane segment at 31–51 (AKAFAAGVILATGFVHMLSGG) threads the bilayer. Topologically, residues 52–72 (SKALSDPCLPEFPWKMFPFPE) are extracellular. The chain crosses the membrane as a helical span at residues 73-93 (FFAMVAALLTLLADFMITGYY). The Cytoplasmic segment spans residues 94–188 (ERKQEKMMNQ…DVGLDSGVRH (95 aa)). Residues 189 to 209 (VVVSQILEMGIVSHSIIIGIS) form a helical membrane-spanning segment. Over 210–221 (LGVSHSPCTIRP) the chain is Extracellular. A helical transmembrane segment spans residues 222 to 242 (LLLALSFHQFFEGFALGGCVA). Over 243–251 (EARLTPRGS) the chain is Cytoplasmic. The chain crosses the membrane as a helical span at residues 252 to 272 (AMMAFFFAITTPIGVAVGTAI). The Extracellular segment spans residues 273–291 (ASSYNSYSVAALVAEGVLD). Residues 292 to 312 (SLSAGILVYMALVDLIAADFL) form a helical membrane-spanning segment. Topologically, residues 313 to 323 (SKKMSVDFRVQ) are cytoplasmic. A helical transmembrane segment spans residues 324–344 (VVSYCFLFLGAGMMSALAIWA).

The protein belongs to the ZIP transporter (TC 2.A.5) family.

The protein resides in the cell membrane. In terms of biological role, zinc transporter involved in zinc uptake in roots. Targeted by BZIP19 transcription factor in response to zinc-deficient conditions. The sequence is that of Zinc transporter 9 (ZIP9) from Arabidopsis thaliana (Mouse-ear cress).